We begin with the raw amino-acid sequence, 360 residues long: MEKVYNFCAGPAMIPAEVLKKVQEELVNWNGLGTSVMEISHRSKEFLAVAKQSEKDLRELLSIPSNYHVLFCHGGARGQFAAVPMNLLGDANTADYMDGGYWAHSAIAEAKKYCSPNAVDITCEREGKKAILPAREWSLSDDAAFVHFCPNETIDGIEIRDLPETDKPIVADLSSTILSRPIDVSKYGVIYAGAQKNIGPAGLTIVIVRDDLLGKAKQEIPSIFDYTVLVDKESMFNTPPTFAWYLAGEVFKWLKELGGLEAMKQRNDAKAELLYNFIDGSNFYNNDVHVDNRSFMNAPFQLKKPELDSKFLEQADAAGLKALKGHRVVGGMRASIYNAMPIEGVQALVDFMRQFEQKNA.

Arg42 lines the L-glutamate pocket. Residues 76–77 (AR), Trp102, Thr153, Asp172, and Gln195 contribute to the pyridoxal 5'-phosphate site. Position 196 is an N6-(pyridoxal phosphate)lysine (Lys196). 237–238 (NT) is a binding site for pyridoxal 5'-phosphate.

This sequence belongs to the class-V pyridoxal-phosphate-dependent aminotransferase family. SerC subfamily. In terms of assembly, homodimer. Pyridoxal 5'-phosphate serves as cofactor.

The protein localises to the cytoplasm. It catalyses the reaction O-phospho-L-serine + 2-oxoglutarate = 3-phosphooxypyruvate + L-glutamate. It carries out the reaction 4-(phosphooxy)-L-threonine + 2-oxoglutarate = (R)-3-hydroxy-2-oxo-4-phosphooxybutanoate + L-glutamate. The protein operates within amino-acid biosynthesis; L-serine biosynthesis; L-serine from 3-phospho-D-glycerate: step 2/3. Its pathway is cofactor biosynthesis; pyridoxine 5'-phosphate biosynthesis; pyridoxine 5'-phosphate from D-erythrose 4-phosphate: step 3/5. Catalyzes the reversible conversion of 3-phosphohydroxypyruvate to phosphoserine and of 3-hydroxy-2-oxo-4-phosphonooxybutanoate to phosphohydroxythreonine. This chain is Phosphoserine aminotransferase, found in Photobacterium profundum (strain SS9).